The sequence spans 938 residues: Isoleucine--tRNA ligase (938 aa).

The short motif at 58–68 (PYANGSIHIGH) is the 'HIGH' region element. Glu561 serves as a coordination point for L-isoleucyl-5'-AMP. The 'KMSKS' region signature appears at 602–606 (KMSKS). Lys605 serves as a coordination point for ATP. Cys901, Cys904, Cys921, and Cys924 together coordinate Zn(2+).

Belongs to the class-I aminoacyl-tRNA synthetase family. IleS type 1 subfamily. As to quaternary structure, monomer. Zn(2+) is required as a cofactor.

The protein localises to the cytoplasm. The catalysed reaction is tRNA(Ile) + L-isoleucine + ATP = L-isoleucyl-tRNA(Ile) + AMP + diphosphate. Its function is as follows. Catalyzes the attachment of isoleucine to tRNA(Ile). As IleRS can inadvertently accommodate and process structurally similar amino acids such as valine, to avoid such errors it has two additional distinct tRNA(Ile)-dependent editing activities. One activity is designated as 'pretransfer' editing and involves the hydrolysis of activated Val-AMP. The other activity is designated 'posttransfer' editing and involves deacylation of mischarged Val-tRNA(Ile). The chain is Isoleucine--tRNA ligase from Serratia proteamaculans (strain 568).